Consider the following 371-residue polypeptide: Putrescine N-methyltransferase 2 (371 aa).

Composition is skewed to polar residues over residues Met-1–Phe-14 and Gly-23–Gly-70. The interval Met-1–Gly-70 is disordered. One can recognise a PABS domain in the interval Pro-82–Thr-319. S-adenosyl-L-methionine is bound by residues Gln-113, Glu-188, and Asp-219–Gly-220. The active-site Proton acceptor is Asp-238. Residue Tyr-307 participates in S-adenosyl-L-methionine binding.

The protein belongs to the class I-like SAM-binding methyltransferase superfamily. Spermidine/spermine synthase family. As to expression, mainly expressed in roots.

It carries out the reaction putrescine + S-adenosyl-L-methionine = N-methylputrescine + S-adenosyl-L-homocysteine + H(+). Its pathway is alkaloid biosynthesis; nicotine biosynthesis. Involved in the biosynthesis of pyridine alkaloid natural products, leading mainly to the production of anabasine, anatabine, nicotine and nornicotine, effective deterrents against herbivores with antiparasitic and pesticide properties (neurotoxins); nornicotine serves as the precursor in the synthesis of the carcinogen compound N'-nitrosonornicotine (NNN). Methyltransferase that mediates the conversion of putrescine to N-methylputrescine. The protein is Putrescine N-methyltransferase 2 of Nicotiana attenuata (Coyote tobacco).